Consider the following 1041-residue polypeptide: MWLRQSSGGGVASVGHVGPLRQRPIDAATDCDPRACYDSFCKHWQQAFEIIQHSAPPSHDDVLGVVSHLDYMVTLLLVELHHCNKVSLPAAEASGPPAAPCLEFLLSENLLDKLYEWACTTGRYANAVRLEQLKLYELLVSHSRHQLLCHEPFLRPLLKILASSQGEIFPPDLEKRLVILLNQLCVVLMQNVHLLDLFFFSAQTQVQEQILNGNVAPPKSGTTTNFIIFSLLIPYVHREGSLGHQARDALLLCMALSQKNSNIGTYIAQYSSICPLLVTGLGGLYSRLPNSIEISSIDWHRITPDDVTEIPELTLFMNALEFCNAVVQVAHEMIKQQLLDFMYQGFIVPVLGPAILQTNIDSQISAMSYLDLILRSITEPGLLRAFVRFLLDTEKFDGERILDALVERLNSPDANLCMVTMALFDTLLGLHCEDLMLELLLKFMLPGKHVPISHRHKINKIDPYLNSSEFFLELSPDVMKRARDLARPKSVHEPVVSELTPLPSLPSPVMSKTIGANWNYYGVHTGDSLYANIQAYLFEAHWRIAQCQKDCLKWANSYRYQKWPRHGQGRVHAHALELARQFFSEFGGGPIAANETGEKQLDSLQSIGESSGYESFKWRPADEESEATDTTVATTASEADMDHNSSSLSSVLGASGKRESWRTSNSNRNELILTDLDFSEDLFAQGTVSLGPFLNAIWGKLQTFTSNSLYVNLHLTGLITRLAWYPLPLIHSLLLRSDIAITSDTPSFHQVLRILKQQIDAELPVTEDSLEIIDVARSSLIDREFRLANARKGNEGSPMHHSQQQQMVTNSGQQQGQLRSAYATLSAATPVQATPTSAYDPFKRSDNKRRSISKSITSMFSRKSASTSTAPPNGSSASSGLSQIYAFFTGAASNLVGNNASNDGRGISQAQTSAGTCETSLSTQPPAGASRTGANATSTAASGSNSSIAGSTLTLSAQSNTTTHSASTLHGLDGGPSTGGFNSEPASLDSVASMGIIASTSGTERSRDLALCAVLMDEWLKELAAIAQEQSVVLVTEQGSL.

Position 490 is a phosphoserine (Ser-490). Disordered regions lie at residues 619 to 648 (RPAD…SSSL), 792 to 818 (KGNE…QGQL), 858 to 879 (SMFS…SASS), 903 to 947 (DGRG…SNSS), and 959 to 986 (SNTT…SEPA). Residues 628–637 (TDTTVATTAS) are compositionally biased toward polar residues. Ser-797 carries the post-translational modification Phosphoserine. Residues 800 to 818 (HHSQQQQMVTNSGQQQGQL) are compositionally biased toward polar residues. Polar residues predominate over residues 903–925 (DGRGISQAQTSAGTCETSLSTQP). A compositionally biased stretch (low complexity) spans 927–947 (AGASRTGANATSTAASGSNSS). Residues 959–968 (SNTTTHSAST) are compositionally biased toward polar residues.

The protein belongs to the FHIP family.

This is FHIP family protein CG3558 from Drosophila melanogaster (Fruit fly).